A 398-amino-acid chain; its full sequence is Homeobox protein knotted-1-like 1 (398 aa).

Disordered regions lie at residues 43-69 (TFHL…PGTH), 172-192 (EFEA…DPEL), and 234-277 (NNNA…PRAE). The segment covering 49–58 (SGGGGGGGSG) has biased composition (gly residues). Residues 280–300 (ELKNHLLRKYSGYLSSLKQEL) form the ELK domain. Residues 301–364 (SKKKKKGKLP…NQRKRHWKPS (64 aa)) constitute a DNA-binding region (homeobox; TALE-type).

Belongs to the TALE/KNOX homeobox family. In terms of tissue distribution, expressed only in the stems.

It is found in the nucleus. Functionally, probably binds to the DNA sequence 5'-TGAC-3'. This chain is Homeobox protein knotted-1-like 1, found in Malus domestica (Apple).